A 396-amino-acid chain; its full sequence is S-adenosylmethionine synthase (396 aa).

H15 is an ATP binding site. D17 serves as a coordination point for Mg(2+). E43 is a K(+) binding site. E56 and Q99 together coordinate L-methionine. The flexible loop stretch occupies residues 99-109; the sequence is QSADIALGVDR. Residues 175–177, 241–242, D250, 256–257, A273, and K277 each bind ATP; these read DGK, RF, and RK. D250 serves as a coordination point for L-methionine. K281 lines the L-methionine pocket.

This sequence belongs to the AdoMet synthase family. In terms of assembly, homotetramer; dimer of dimers. The cofactor is Mg(2+). K(+) is required as a cofactor.

Its subcellular location is the cytoplasm. The enzyme catalyses L-methionine + ATP + H2O = S-adenosyl-L-methionine + phosphate + diphosphate. Its pathway is amino-acid biosynthesis; S-adenosyl-L-methionine biosynthesis; S-adenosyl-L-methionine from L-methionine: step 1/1. Its function is as follows. Catalyzes the formation of S-adenosylmethionine (AdoMet) from methionine and ATP. The overall synthetic reaction is composed of two sequential steps, AdoMet formation and the subsequent tripolyphosphate hydrolysis which occurs prior to release of AdoMet from the enzyme. The polypeptide is S-adenosylmethionine synthase (Desulfitobacterium hafniense (strain DSM 10664 / DCB-2)).